The chain runs to 205 residues: Adenylate kinase (205 aa).

Gly11–Thr16 provides a ligand contact to ATP. The interval Ser31 to Val60 is NMP. AMP is bound by residues Thr32, Arg37, Asp58–Val60, Gly86–Arg89, and Gln93. Positions Lys127–Asp137 are LID. An ATP-binding site is contributed by Arg128. AMP-binding residues include Arg134 and Arg145. Gly173 is a binding site for ATP.

The protein belongs to the adenylate kinase family. In terms of assembly, monomer.

Its subcellular location is the cytoplasm. The catalysed reaction is AMP + ATP = 2 ADP. The protein operates within purine metabolism; AMP biosynthesis via salvage pathway; AMP from ADP: step 1/1. In terms of biological role, catalyzes the reversible transfer of the terminal phosphate group between ATP and AMP. Plays an important role in cellular energy homeostasis and in adenine nucleotide metabolism. The protein is Adenylate kinase of Micrococcus luteus (strain ATCC 4698 / DSM 20030 / JCM 1464 / CCM 169 / CCUG 5858 / IAM 1056 / NBRC 3333 / NCIMB 9278 / NCTC 2665 / VKM Ac-2230) (Micrococcus lysodeikticus).